A 194-amino-acid chain; its full sequence is Probable RNA 2'-phosphotransferase (194 aa).

This sequence belongs to the KptA/TPT1 family.

Removes the 2'-phosphate from RNA via an intermediate in which the phosphate is ADP-ribosylated by NAD followed by a presumed transesterification to release the RNA and generate ADP-ribose 1''-2''-cyclic phosphate (APPR&gt;P). May function as an ADP-ribosylase. This chain is Probable RNA 2'-phosphotransferase, found in Burkholderia lata (strain ATCC 17760 / DSM 23089 / LMG 22485 / NCIMB 9086 / R18194 / 383).